The chain runs to 280 residues: Type II restriction enzyme MboI (280 aa).

This sequence belongs to the DpnII type II restriction endonuclease family.

It carries out the reaction Endonucleolytic cleavage of DNA to give specific double-stranded fragments with terminal 5'-phosphates.. Functionally, a P subtype restriction enzyme that recognizes the double-stranded unmethylated sequence 5'-GATC-3' and cleaves before G-1. The protein is Type II restriction enzyme MboI (mboIR) of Moraxella bovis.